Here is a 318-residue protein sequence, read N- to C-terminus: Pyrimidine-specific ribonucleoside hydrolase RihA (318 aa).

His-240 is an active-site residue.

This sequence belongs to the IUNH family. RihA subfamily.

Hydrolyzes cytidine or uridine to ribose and cytosine or uracil, respectively. This Shewanella sp. (strain ANA-3) protein is Pyrimidine-specific ribonucleoside hydrolase RihA.